We begin with the raw amino-acid sequence, 472 residues long: Eukaryotic translation initiation factor 2 subunit 3 (472 aa).

An N-acetylalanine modification is found at A2. Residue S16 is modified to Phosphoserine. The region spanning 39-248 (QATINIGTIG…IVKKIPVPPR (210 aa)) is the tr-type G domain. A G1 region spans residues 48–55 (GHVAHGKS). A GTP-binding site is contributed by 51-56 (AHGKST). The segment at 76–80 (NITIK) is G2. The interval 134 to 137 (DCPG) is G3. GTP contacts are provided by residues 190–193 (NKID) and 225–227 (SAQ). Residues 190 to 193 (NKID) form a G4 region. Positions 225 to 227 (SAQ) are G5. An interacts with CDC123 region spans residues 457-469 (GQIRRGVTIKPTV).

This sequence belongs to the TRAFAC class translation factor GTPase superfamily. Classic translation factor GTPase family. EIF2G subfamily. As to quaternary structure, eukaryotic translation initiation factor 2 eIF2 is a heterotrimeric complex composed of an alpha (EIF2S1), a beta (EIF2S2) and a gamma (EIF2S3) chain. eIF2 is member of the 43S pre-initiation complex (43S PIC). Interacts (via C-terminus) with CDC123; the interaction is direct.

It is found in the cytoplasm. The protein localises to the cytosol. The enzyme catalyses GTP + H2O = GDP + phosphate + H(+). Functionally, member of the eIF2 complex that functions in the early steps of protein synthesis by forming a ternary complex with GTP and initiator tRNA. This complex binds to a 40S ribosomal subunit, followed by mRNA binding to form the 43S pre-initiation complex (43S PIC). Junction of the 60S ribosomal subunit to form the 80S initiation complex is preceded by hydrolysis of the GTP bound to eIF2 and release of an eIF2-GDP binary complex. In order for eIF2 to recycle and catalyze another round of initiation, the GDP bound to eIF2 must exchange with GTP by way of a reaction catalyzed by eIF-2B. This chain is Eukaryotic translation initiation factor 2 subunit 3 (EIF2S3), found in Pongo abelii (Sumatran orangutan).